The following is a 517-amino-acid chain: Transcription factor MTB3 (517 aa).

Residues 290–331 are disordered; it reads GNSSNGYRSDEGEGKLYKEELDERKPRKRGRKPANGREEALN. Positions 297–314 are enriched in basic and acidic residues; the sequence is RSDEGEGKLYKEELDERK. Positions 327-340 are basic motif; degenerate; that stretch reads EEALNHVEAERQRR. A bHLH domain is found at 327–376; it reads EEALNHVEAERQRREKLNQRFYALRAVVPNISKMDKASLLGDAIAYITDL. Positions 341–376 are helix-loop-helix motif; it reads EKLNQRFYALRAVVPNISKMDKASLLGDAIAYITDL.

The protein localises to the nucleus. Its function is as follows. Transcription factor that negatively regulates jasmonate (JA) signaling. Negatively regulates JA-dependent response to wounding, JA-induced expression of defense genes, JA-dependent responses against herbivorous insects, and JA-dependent resistance against Botrytis cinerea infection. Plays a positive role in resistance against the bacterial pathogen Pseudomonas syringae pv tomato DC3000. This Solanum lycopersicum (Tomato) protein is Transcription factor MTB3.